Consider the following 245-residue polypeptide: DNA polymerase sliding clamp (245 aa).

This sequence belongs to the PCNA family. As to quaternary structure, homotrimer. The subunits circularize to form a toroid; DNA passes through its center. Replication factor C (RFC) is required to load the toroid on the DNA.

Functionally, sliding clamp subunit that acts as a moving platform for DNA processing. Responsible for tethering the catalytic subunit of DNA polymerase and other proteins to DNA during high-speed replication. In Picrophilus torridus (strain ATCC 700027 / DSM 9790 / JCM 10055 / NBRC 100828 / KAW 2/3), this protein is DNA polymerase sliding clamp.